We begin with the raw amino-acid sequence, 254 residues long: 4-hydroxy-tetrahydrodipicolinate reductase (254 aa).

7–12 (GASGRI) lines the NAD(+) pocket. Residue Arg35 participates in NADP(+) binding. NAD(+) contacts are provided by residues 91 to 93 (GTT) and 115 to 118 (AHNM). His147 serves as the catalytic Proton donor/acceptor. His148 lines the (S)-2,3,4,5-tetrahydrodipicolinate pocket. The Proton donor role is filled by Lys151. 157 to 158 (GT) provides a ligand contact to (S)-2,3,4,5-tetrahydrodipicolinate.

Belongs to the DapB family.

The protein localises to the cytoplasm. It carries out the reaction (S)-2,3,4,5-tetrahydrodipicolinate + NAD(+) + H2O = (2S,4S)-4-hydroxy-2,3,4,5-tetrahydrodipicolinate + NADH + H(+). The catalysed reaction is (S)-2,3,4,5-tetrahydrodipicolinate + NADP(+) + H2O = (2S,4S)-4-hydroxy-2,3,4,5-tetrahydrodipicolinate + NADPH + H(+). The protein operates within amino-acid biosynthesis; L-lysine biosynthesis via DAP pathway; (S)-tetrahydrodipicolinate from L-aspartate: step 4/4. Functionally, catalyzes the conversion of 4-hydroxy-tetrahydrodipicolinate (HTPA) to tetrahydrodipicolinate. This Helicobacter pylori (strain P12) protein is 4-hydroxy-tetrahydrodipicolinate reductase.